Reading from the N-terminus, the 169-residue chain is Putative phosphoesterase SERP0604 (169 aa).

Catalysis depends on H34, which acts as the Proton donor. 2 consecutive short sequence motifs (HXTX) follow at residues H34–I37 and H115–I118. Catalysis depends on H115, which acts as the Proton acceptor.

It belongs to the 2H phosphoesterase superfamily. YjcG family.

The polypeptide is Putative phosphoesterase SERP0604 (Staphylococcus epidermidis (strain ATCC 35984 / DSM 28319 / BCRC 17069 / CCUG 31568 / BM 3577 / RP62A)).